Reading from the N-terminus, the 491-residue chain is Probable malate:quinone oxidoreductase (491 aa).

This sequence belongs to the MQO family. Requires FAD as cofactor.

The enzyme catalyses (S)-malate + a quinone = a quinol + oxaloacetate. Its pathway is carbohydrate metabolism; tricarboxylic acid cycle; oxaloacetate from (S)-malate (quinone route): step 1/1. This is Probable malate:quinone oxidoreductase from Leifsonia xyli subsp. xyli (strain CTCB07).